Here is a 1223-residue protein sequence, read N- to C-terminus: Rho family-interacting cell polarization regulator 1 (1223 aa).

Residue Ser-22 is modified to Phosphoserine. Residues 89-114 (LTAYLEVHQQEQEKLQGQIRESKRNS) adopt a coiled-coil conformation. Phosphoserine occurs at positions 349 and 351. The residue at position 355 (Thr-355) is a Phosphothreonine. The interval 375–411 (NGTAWSLSSESSDDSSSPQLSGTARHSPAPRPLVQQP) is disordered. Over residues 380-395 (SLSSESSDDSSSPQLS) the composition is skewed to low complexity. Phosphoserine is present on residues Ser-456 and Ser-459. 2 disordered regions span residues 475-769 (ESLA…APQH) and 856-889 (FLNE…SPSA). 2 stretches are compositionally biased toward low complexity: residues 505-523 (GHSA…PTST) and 546-564 (PGPT…TTTH). The span at 565-592 (SAPSPLTHTTTGSTHKPIISTLTTTGPT) shows a compositional bias: polar residues. Composition is skewed to low complexity over residues 601-650 (TTTS…PTPS) and 659-675 (TSPT…TTSP). A compositionally biased stretch (polar residues) spans 680–695 (VSPSTSLELATLSSPS). The span at 858–867 (NEDEDEDNDV) shows a compositional bias: acidic residues. 2 positions are modified to phosphoserine: Ser-874 and Ser-875.

It belongs to the RIPOR family. Interacts (via N-terminus) with RHOA (GTP-bound form); this interaction links active RHOA to STK24 and STK26 kinases. Interacts with RHOB. Interacts with RHOC. Interacts (via C-terminus) with PDCD10; this interaction occurs in a Rho-independent manner. Interacts (via C-terminus) with STK24; this interaction occurs in a PDCD10-dependent and Rho-independent manner. Interacts (via C-terminus) with STK26; this interaction occurs in a PDCD10-dependent and Rho-independent manner. Interacts (via N-terminus) with 14-3-3 proteins; these interactions occur in a Rho-dependent manner.

The protein localises to the cytoplasm. Its subcellular location is the golgi apparatus. Its function is as follows. Downstream effector protein for Rho-type small GTPases that plays a role in cell polarity and directional migration. Acts as an adapter protein, linking active Rho proteins to STK24 and STK26 kinases, and hence positively regulates Golgi reorientation in polarized cell migration upon Rho activation. Involved in the subcellular relocation of STK26 from the Golgi to cytoplasm punctae in a Rho- and PDCD10-dependent manner upon serum stimulation. The sequence is that of Rho family-interacting cell polarization regulator 1 (RIPOR1) from Homo sapiens (Human).